Here is a 368-residue protein sequence, read N- to C-terminus: 3-isopropylmalate dehydrogenase (368 aa).

79–91 (GPEWGTSSTVRPE) is a binding site for NAD(+). Residues arginine 98, arginine 108, arginine 137, and aspartate 226 each coordinate substrate. Mg(2+) contacts are provided by aspartate 226, aspartate 251, and aspartate 255. 291 to 303 (GSAPDISGKGIVN) contributes to the NAD(+) binding site.

Belongs to the isocitrate and isopropylmalate dehydrogenases family. In terms of assembly, homodimer. The cofactor is Mg(2+). Requires Mn(2+) as cofactor.

The protein localises to the cytoplasm. The enzyme catalyses (2R,3S)-3-isopropylmalate + NAD(+) = 4-methyl-2-oxopentanoate + CO2 + NADH. It participates in amino-acid biosynthesis; L-leucine biosynthesis; L-leucine from 3-methyl-2-oxobutanoate: step 3/4. Catalyzes the oxidation of 3-carboxy-2-hydroxy-4-methylpentanoate (3-isopropylmalate) to 3-carboxy-4-methyl-2-oxopentanoate. The product decarboxylates to 4-methyl-2 oxopentanoate. This Neurospora crassa (strain ATCC 24698 / 74-OR23-1A / CBS 708.71 / DSM 1257 / FGSC 987) protein is 3-isopropylmalate dehydrogenase (leu-1).